A 573-amino-acid polypeptide reads, in one-letter code: DNA ligase (573 aa).

Glu-250 contacts ATP. Lys-252 acts as the N6-AMP-lysine intermediate in catalysis. Arg-257, Arg-272, Glu-301, Phe-342, Arg-432, and Lys-438 together coordinate ATP.

The protein belongs to the ATP-dependent DNA ligase family. Mg(2+) is required as a cofactor.

It carries out the reaction ATP + (deoxyribonucleotide)n-3'-hydroxyl + 5'-phospho-(deoxyribonucleotide)m = (deoxyribonucleotide)n+m + AMP + diphosphate.. Functionally, DNA ligase that seals nicks in double-stranded DNA during DNA replication, DNA recombination and DNA repair. The chain is DNA ligase from Methanococcus maripaludis (strain C5 / ATCC BAA-1333).